Reading from the N-terminus, the 468-residue chain is UDP-N-acetylmuramate--L-alanine ligase (468 aa).

121 to 127 (GSHGKTT) is an ATP binding site.

Belongs to the MurCDEF family.

It is found in the cytoplasm. It catalyses the reaction UDP-N-acetyl-alpha-D-muramate + L-alanine + ATP = UDP-N-acetyl-alpha-D-muramoyl-L-alanine + ADP + phosphate + H(+). Its pathway is cell wall biogenesis; peptidoglycan biosynthesis. In terms of biological role, cell wall formation. This Borrelia garinii subsp. bavariensis (strain ATCC BAA-2496 / DSM 23469 / PBi) (Borreliella bavariensis) protein is UDP-N-acetylmuramate--L-alanine ligase.